We begin with the raw amino-acid sequence, 213 residues long: Orotate phosphoribosyltransferase (213 aa).

Lysine 26 is a 5-phospho-alpha-D-ribose 1-diphosphate binding site. Phenylalanine 34–phenylalanine 35 contributes to the orotate binding site. Residues tyrosine 72 to lysine 73, arginine 99, lysine 100, lysine 103, histidine 105, and aspartate 124 to alanine 132 contribute to the 5-phospho-alpha-D-ribose 1-diphosphate site. The orotate site is built by threonine 128 and arginine 156.

This sequence belongs to the purine/pyrimidine phosphoribosyltransferase family. PyrE subfamily. As to quaternary structure, homodimer. Mg(2+) serves as cofactor.

The enzyme catalyses orotidine 5'-phosphate + diphosphate = orotate + 5-phospho-alpha-D-ribose 1-diphosphate. It participates in pyrimidine metabolism; UMP biosynthesis via de novo pathway; UMP from orotate: step 1/2. In terms of biological role, catalyzes the transfer of a ribosyl phosphate group from 5-phosphoribose 1-diphosphate to orotate, leading to the formation of orotidine monophosphate (OMP). This is Orotate phosphoribosyltransferase from Pseudomonas aeruginosa (strain UCBPP-PA14).